Reading from the N-terminus, the 354-residue chain is GTPase Obg (354 aa).

The region spanning 1-159 (MKFVDEVKIH…RDLVLELKLL (159 aa)) is the Obg domain. Residues 160–333 (ADVGIVGYPN…LLDAVGRALF (174 aa)) enclose the OBG-type G domain. Residues 166-173 (GYPNAGKS), 191-195 (FTTLT), 212-215 (DIPG), 283-286 (TKID), and 314-316 (SAV) each bind GTP. The Mg(2+) site is built by serine 173 and threonine 193.

It belongs to the TRAFAC class OBG-HflX-like GTPase superfamily. OBG GTPase family. As to quaternary structure, monomer. The cofactor is Mg(2+).

It is found in the cytoplasm. In terms of biological role, an essential GTPase which binds GTP, GDP and possibly (p)ppGpp with moderate affinity, with high nucleotide exchange rates and a fairly low GTP hydrolysis rate. Plays a role in control of the cell cycle, stress response, ribosome biogenesis and in those bacteria that undergo differentiation, in morphogenesis control. This is GTPase Obg from Anaeromyxobacter sp. (strain K).